The primary structure comprises 196 residues: dTDP-4-dehydro-6-deoxyglucose 3-epimerase (196 aa).

Substrate contacts are provided by residues arginine 21, glutamate 26, 45 to 47 (QVN), and arginine 57. The Proton acceptor role is filled by histidine 60. The substrate site is built by lysine 70 and arginine 117. Tyrosine 130 functions as the Proton donor in the catalytic mechanism. Residues glutamate 141 and arginine 166 each contribute to the substrate site.

This sequence belongs to the dTDP-4-dehydrorhamnose 3,5-epimerase family. As to quaternary structure, homodimer.

It carries out the reaction dTDP-4-dehydro-6-deoxy-alpha-D-glucose = dTDP-4-dehydro-6-deoxy-alpha-D-allose. Its pathway is antibiotic biosynthesis. Involved in the biosynthesis of dTDP-6-deoxy-D-allose, an intermediate in the biosynthesis of mycinose, which is one of the two unusual sugars attached to the 16-membered macrolactone ring of the aglycone antibiotic dihydrochalcomycin (GERI-155). Catalyzes the conversion of dTDP-4-oxo-6-deoxyglucose to dTDP-4-oxo-6-deoxyallose, via a C-3 epimerization. The polypeptide is dTDP-4-dehydro-6-deoxyglucose 3-epimerase (Streptomyces sp).